The chain runs to 932 residues: Protein translocase subunit SecA (932 aa).

ATP contacts are provided by residues Q83, 101 to 105, and D491; that span reads GEGKT.

Belongs to the SecA family. Monomer and homodimer. Part of the essential Sec protein translocation apparatus which comprises SecA, SecYEG and auxiliary proteins SecDF. Other proteins may also be involved.

The protein resides in the cell inner membrane. The protein localises to the cellular thylakoid membrane. Its subcellular location is the cytoplasm. It catalyses the reaction ATP + H2O + cellular proteinSide 1 = ADP + phosphate + cellular proteinSide 2.. Functionally, part of the Sec protein translocase complex. Interacts with the SecYEG preprotein conducting channel. Has a central role in coupling the hydrolysis of ATP to the transfer of proteins into and across the cell membrane, serving as an ATP-driven molecular motor driving the stepwise translocation of polypeptide chains across the membrane. Probably participates in protein translocation into and across both the cytoplasmic and thylakoid membranes in cyanobacterial cells. The chain is Protein translocase subunit SecA from Cyanothece sp. (strain PCC 7425 / ATCC 29141).